The sequence spans 187 residues: Frataxin, mitochondrial (187 aa).

This sequence belongs to the frataxin family. As to quaternary structure, monomer. Oligomer. Interacts with NIFS1.

It is found in the mitochondrion. The enzyme catalyses 4 Fe(2+) + O2 + 4 H(+) = 4 Fe(3+) + 2 H2O. Its function is as follows. Promotes the biosynthesis of heme as well as the assembly and repair of iron-sulfur clusters by delivering Fe(2+) to proteins involved in these pathways. May play a role in the protection against iron-catalyzed oxidative stress through its ability to catalyze the oxidation of Fe(2+) to Fe(3+). May be able to store large amounts of the metal in the form of a ferrihydrite mineral by oligomerization. Binds to the mitochondrial cysteine desulfurase NIFS1 and increases its activity. The sequence is that of Frataxin, mitochondrial (FH) from Arabidopsis thaliana (Mouse-ear cress).